Here is a 283-residue protein sequence, read N- to C-terminus: Ribosomal RNA small subunit methyltransferase A (283 aa).

Asn-13, Leu-15, Gly-39, Glu-59, Asp-87, and Asn-108 together coordinate S-adenosyl-L-methionine.

Belongs to the class I-like SAM-binding methyltransferase superfamily. rRNA adenine N(6)-methyltransferase family. RsmA subfamily.

It is found in the cytoplasm. The enzyme catalyses adenosine(1518)/adenosine(1519) in 16S rRNA + 4 S-adenosyl-L-methionine = N(6)-dimethyladenosine(1518)/N(6)-dimethyladenosine(1519) in 16S rRNA + 4 S-adenosyl-L-homocysteine + 4 H(+). In terms of biological role, specifically dimethylates two adjacent adenosines (A1518 and A1519) in the loop of a conserved hairpin near the 3'-end of 16S rRNA in the 30S particle. May play a critical role in biogenesis of 30S subunits. The protein is Ribosomal RNA small subunit methyltransferase A of Helicobacter hepaticus (strain ATCC 51449 / 3B1).